Here is a 2603-residue protein sequence, read N- to C-terminus: Squalestatin tetraketide synthase (2603 aa).

One can recognise a Ketosynthase family 3 (KS3) domain in the interval 29 to 455; the sequence is TIPIAIIGMS…GANAHVILES (427 aa). Catalysis depends on for beta-ketoacyl synthase activity residues Cys202, His337, and His377. The tract at residues 463–512 is disordered; sequence IANGSGRSNGTGNGHNGANGTTNGHNGTNGTTNGHFDATQATNGHYGTDE. Residues 469-479 show a composition bias toward gly residues; that stretch reads RSNGTGNGHNG. A compositionally biased stretch (low complexity) spans 480–497; the sequence is ANGTTNGHNGTNGTTNGH. Positions 608-931 are malonyl-CoA:ACP transacylase (MAT) domain; that stretch reads VFTGQGAQWF…PYISCLLRGQ (324 aa). The tract at residues 1000–1138 is N-terminal hotdog fold; sequence HDLLGSLIVG…GRITIEFDTS (139 aa). Positions 1000–1314 constitute a PKS/mFAS DH domain; it reads HDLLGSLIVG…NQSVGQMAPQ (315 aa). The dehydratase (DH) domain stretch occupies residues 1000–1314; sequence HDLLGSLIVG…NQSVGQMAPQ (315 aa). The active-site Proton acceptor; for dehydratase activity is His1032. A C-terminal hotdog fold region spans residues 1157 to 1314; sequence LMRSVDPSNL…NQSVGQMAPQ (158 aa). The active-site Proton donor; for dehydratase activity is Asp1223. The segment at 1465-1665 is methyltransferase (CMet) domain; that stretch reads LYRYYTDAIK…GLDIELRDCD (201 aa). The tract at residues 1892–2205 is enoyl reductase (ER) (ER) domain; sequence GLIDTLQFSK…AGKHMGKIVI (314 aa). The tract at residues 2228-2406 is ketoreductase (KR) domain; sequence ASYLIVGGLG…AVSIDLGMVQ (179 aa). Residues 2516–2593 form the Carrier domain; sequence EAIDVVGRAI…ALATTVATKS (78 aa). An O-(pantetheine 4'-phosphoryl)serine modification is found at Ser2553.

The protein operates within secondary metabolite biosynthesis. Functionally, highly reducing polyketide synthase (HR-PKS); part of the gene cluster that mediates the biosynthesis of squalestatin S1 (SQS1, also known as zaragozic acid A), a lead compound for the treatment of hyper-cholesterolemia by targeting squalene synthase (SS). Pks1 is responsible for the biosynthesis of the tetraketide sidechain of SQS1. The biosynthesis must involve 3 rounds of chain extension. After the first and second rounds methyl-transfer occurs, and in all rounds of extension the ketoreductase and dehydratase are active. The enoyl reductase and C-MeT are not active in the final round of extension. The polypeptide is Squalestatin tetraketide synthase (Phoma sp. (strain C2932)).